The sequence spans 254 residues: UPF0246 protein CPF_2407 (254 aa).

Belongs to the UPF0246 family.

In Clostridium perfringens (strain ATCC 13124 / DSM 756 / JCM 1290 / NCIMB 6125 / NCTC 8237 / Type A), this protein is UPF0246 protein CPF_2407.